A 176-amino-acid polypeptide reads, in one-letter code: Probable DNA-directed RNA polymerase subunit delta (176 aa).

Residues 14–81 form the HTH HARE-type domain; the sequence is CSMIEVVHSV…GENRWGLRSW (68 aa). The segment at 90 to 176 is disordered; the sequence is EILPQPKPKK…ETEEEEEEEL (87 aa). The span at 106–176 shows a compositional bias: acidic residues; sequence DGFDDYIEED…ETEEEEEEEL (71 aa).

The protein belongs to the RpoE family. In terms of assembly, RNAP is composed of a core of 2 alpha, a beta and a beta' subunits. The core is associated with a delta subunit and one of several sigma factors.

Its function is as follows. Participates in both the initiation and recycling phases of transcription. In the presence of the delta subunit, RNAP displays an increased specificity of transcription, a decreased affinity for nucleic acids, and an increased efficiency of RNA synthesis because of enhanced recycling. In Bacillus thuringiensis subsp. konkukian (strain 97-27), this protein is Probable DNA-directed RNA polymerase subunit delta.